The primary structure comprises 464 residues: Zinc transporter 6-A (464 aa).

At 1–33 (MGTIYLFRKTQRSLLGKLAQEFRLVTADRRSWK) the chain is on the cytoplasmic side. A helical transmembrane segment spans residues 34–54 (ILLFGAINVVCTAFLLTWCSS). Over 55–64 (TNSMALTAYT) the chain is Extracellular. Residues 65-85 (YLTIFDLFSLITSLISYWVTM) traverse the membrane as a helical segment. The Cytoplasmic segment spans residues 86 to 98 (KKPSPTYSFGFER). The helical transmembrane segment at 99 to 119 (FEVLAVFASTVLAQLGALFIL) threads the bilayer. Over 120-134 (KESAERFIEQPEIHT) the chain is Extracellular. A helical membrane pass occupies residues 135–155 (GRLLVGTFVALFFNLFTMLSI). Residues 156-200 (RNKPFAYVSDAASTSWLQEHVADLSRSLCGIIPGLSSIFLPRMNP) are Cytoplasmic-facing. A helical transmembrane segment spans residues 201–221 (FVLIDIAGALALCITYMLIEI). Residues 222 to 223 (NN) are Extracellular-facing. A helical transmembrane segment spans residues 224 to 244 (YFAVDTASAVAIAVMTFGTMY). The Cytoplasmic segment spans residues 245–464 (PMSVYSGKVL…TPGQFTQFRQ (220 aa)).

This sequence belongs to the cation diffusion facilitator (CDF) transporter (TC 2.A.4) family. SLC30A subfamily. Heterodimer with SLC30A5; form a functional zinc ion transmembrane transporter.

The protein resides in the golgi apparatus. Its subcellular location is the trans-Golgi network membrane. In terms of biological role, has probably no intrinsic transporter activity but together with SLC30A5 forms a functional zinc ion:proton antiporter heterodimer, mediating zinc entry into the lumen of organelles along the secretory pathway. As part of that zinc ion:proton antiporter, contributes to zinc ion homeostasis within the early secretory pathway and regulates the activation and folding of enzymes like alkaline phosphatases and enzymes involved in phosphatidylinositol glycan anchor biosynthesis. The chain is Zinc transporter 6-A (slc30a6-a) from Xenopus laevis (African clawed frog).